Reading from the N-terminus, the 127-residue chain is Large-conductance mechanosensitive channel (127 aa).

3 consecutive transmembrane segments (helical) span residues 9-29, 32-52, and 75-95; these read EFAM…GVAF, IVTA…LGGI, and VIDF…INLL.

The protein belongs to the MscL family. Homopentamer.

It localises to the cell inner membrane. Functionally, channel that opens in response to stretch forces in the membrane lipid bilayer. May participate in the regulation of osmotic pressure changes within the cell. The sequence is that of Large-conductance mechanosensitive channel from Legionella pneumophila subsp. pneumophila (strain Philadelphia 1 / ATCC 33152 / DSM 7513).